We begin with the raw amino-acid sequence, 336 residues long: MFENMMDLGSLRHGDELIKRGFAKMTKGGVIMDVTTAEQARIAEKAGAVAVMALERVPADIRANGGVARMADPLKIKEIIDAVSIPVMAKVRIGHISEAYVLESLGVDMLDESEVLTPADPFFHINKKIYKVPVVCGARTFPEAVRRIFEGAAMIRTKGEAGTGNIIEAMRHIRKVNDGINVLLRLNESDMKKVAENIASSYFILRKETSKELFGYDNFPDMDDLYYGMDSDKIINGILKTLKEIKKYRRLPVVNFAAGGVATPSDAALMMKMGLDGVFVGSGIFKSKDPARMASAIVEAAENYEDYKTIADVSSGLQGMEGLEIDNIERLQERGW.

Residue D33 coordinates D-ribose 5-phosphate. K90 acts as the Schiff-base intermediate with D-ribose 5-phosphate in catalysis. G162 contacts D-ribose 5-phosphate. R174 contributes to the D-glyceraldehyde 3-phosphate binding site. D-ribose 5-phosphate is bound by residues G260 and 281 to 282; that span reads GS.

This sequence belongs to the PdxS/SNZ family. In terms of assembly, in the presence of PdxT, forms a dodecamer of heterodimers.

The enzyme catalyses aldehydo-D-ribose 5-phosphate + D-glyceraldehyde 3-phosphate + L-glutamine = pyridoxal 5'-phosphate + L-glutamate + phosphate + 3 H2O + H(+). It participates in cofactor biosynthesis; pyridoxal 5'-phosphate biosynthesis. Functionally, catalyzes the formation of pyridoxal 5'-phosphate from ribose 5-phosphate (RBP), glyceraldehyde 3-phosphate (G3P) and ammonia. The ammonia is provided by the PdxT subunit. Can also use ribulose 5-phosphate and dihydroxyacetone phosphate as substrates, resulting from enzyme-catalyzed isomerization of RBP and G3P, respectively. The sequence is that of Pyridoxal 5'-phosphate synthase subunit PdxS from Picrophilus torridus (strain ATCC 700027 / DSM 9790 / JCM 10055 / NBRC 100828 / KAW 2/3).